The sequence spans 210 residues: Guanylate kinase (210 aa).

Residues 5–184 (GLLIVFSGPS…AAERVKHIIE (180 aa)) form the Guanylate kinase-like domain. Residue 12-19 (GPSGVGKG) coordinates ATP.

Belongs to the guanylate kinase family.

The protein resides in the cytoplasm. It catalyses the reaction GMP + ATP = GDP + ADP. In terms of biological role, essential for recycling GMP and indirectly, cGMP. The polypeptide is Guanylate kinase (Streptococcus mutans serotype c (strain ATCC 700610 / UA159)).